The sequence spans 387 residues: Proline-rich protein 5 (387 aa).

2 interaction with RICTOR regions span residues 10-96 (MSSP…LTKG) and 189-219 (HESR…YGLY). A disordered region spans residues 13 to 34 (PSLSDLGKREPGAAGTDERGTQ). Positions 18-33 (LGKREPGAAGTDERGT) are enriched in basic and acidic residues. Ser-253 is modified (phosphoserine). Positions 262–387 (NPVAEHEAEG…EAPGGRPSVV (126 aa)) are disordered. A compositionally biased stretch (polar residues) spans 305–314 (SGTFRSSPTP). A Phosphoserine modification is found at Ser-373.

It belongs to the PROTOR family. In terms of assembly, associated component of the mechanistic target of rapamycin complex 2 (mTORC2). Binds directly to MTOR and RICTOR within the TORC2 complex. Ubiquitously expressed. Expressed at high levels in kidney.

In terms of biological role, associated subunit of mTORC2, which regulates cell growth and survival in response to hormonal signals. mTORC2 is activated by growth factors, but, in contrast to mTORC1, seems to be nutrient-insensitive. mTORC2 seems to function upstream of Rho GTPases to regulate the actin cytoskeleton, probably by activating one or more Rho-type guanine nucleotide exchange factors. PRR5 plays an important role in regulation of PDGFRB expression and in modulation of platelet-derived growth factor signaling. May act as a tumor suppressor in breast cancer. In Mus musculus (Mouse), this protein is Proline-rich protein 5.